Reading from the N-terminus, the 219-residue chain is UPF0073 inner membrane protein YqfA (219 aa).

Residues M1–H23 lie on the Cytoplasmic side of the membrane. Residues G24–L44 traverse the membrane as a helical segment. At N45–S53 the chain is on the periplasmic side. Residues Y54–I74 traverse the membrane as a helical segment. The Cytoplasmic segment spans residues P75–A90. Residues I91 to L111 form a helical membrane-spanning segment. The Periplasmic segment spans residues A112–R113. The chain crosses the membrane as a helical span at residues G114–A134. At H135 to K138 the chain is on the cytoplasmic side. The helical transmembrane segment at I139–M159 threads the bilayer. The Periplasmic segment spans residues A160–A165. Residues G166–V186 form a helical membrane-spanning segment. Topologically, residues C187–A195 are cytoplasmic. A helical transmembrane segment spans residues I196–I216. Residues G217–A219 lie on the Periplasmic side of the membrane.

It belongs to the UPF0073 (Hly-III) family.

It is found in the cell inner membrane. In Escherichia coli O157:H7, this protein is UPF0073 inner membrane protein YqfA (yqfA).